The sequence spans 1067 residues: TBC1 domain family member 31 (1067 aa).

WD repeat units lie at residues 36–75 (GKVV…FRLV), 76–119 (LKTG…SWMR), 120–161 (GHEG…KLNI), 162–201 (RQSV…CKYQ), 202–249 (LPLP…RVIQ), and 250–288 (MPSQ…RFIN). Positions 419–594 (EYPAKYRMFV…RLFDNIFSNH (176 aa)) constitute a Rab-GAP TBC domain. The stretch at 724 to 773 (QQELLQKAEEQRKHVLEQEEEKLTQQRAKLAAMKRELKVKELQLLDATRR) forms a coiled coil. Basic and acidic residues-rich tracts occupy residues 896 to 912 (KADA…EELQ) and 926 to 937 (MREEAHRKKDEA). Disordered regions lie at residues 896–955 (KADA…HSDG) and 1045–1067 (AARA…PVSP). Polar residues-rich tracts occupy residues 941-953 (IQES…STHS) and 1052-1067 (SSAS…PVSP).

The protein resides in the cytoplasm. The protein localises to the cytoskeleton. It is found in the microtubule organizing center. It localises to the centrosome. Its subcellular location is the centriolar satellite. The protein resides in the cilium basal body. In terms of biological role, molecular adapter which is involved in cilium biogenesis. Part of a functional complex including OFD1 a centriolar protein involved in cilium assembly. Could regulate the cAMP-dependent phosphorylation of OFD1, and its subsequent ubiquitination by PJA2 which ultimately leads to its proteasomal degradation. The polypeptide is TBC1 domain family member 31 (Oryzias latipes (Japanese rice fish)).